A 426-amino-acid chain; its full sequence is Glutamate-1-semialdehyde 2,1-aminomutase (426 aa).

N6-(pyridoxal phosphate)lysine is present on Lys265.

Belongs to the class-III pyridoxal-phosphate-dependent aminotransferase family. HemL subfamily. Homodimer. The cofactor is pyridoxal 5'-phosphate.

Its subcellular location is the cytoplasm. The catalysed reaction is (S)-4-amino-5-oxopentanoate = 5-aminolevulinate. It participates in porphyrin-containing compound metabolism; protoporphyrin-IX biosynthesis; 5-aminolevulinate from L-glutamyl-tRNA(Glu): step 2/2. The protein is Glutamate-1-semialdehyde 2,1-aminomutase of Salmonella paratyphi A (strain ATCC 9150 / SARB42).